A 513-amino-acid polypeptide reads, in one-letter code: Probable E3 ubiquitin-protein ligase XBOS34 (513 aa).

ANK repeat units follow at residues 39–69 (EGKTPLMVASMRPDLINVVQVLIELGANVNA), 75–104 (YCGTALHHAAKKGLEQTVHLLLSHGANPFI), and 108–137 (DCHTALDLAREKGHVNVVRAIEGRISLFCG). Composition is skewed to polar residues over residues 309–327 (ITTTTATNDWGNPPSNSLN) and 335–355 (SAPSKTSGQVPVVTSSSSTYN). Disordered stretches follow at residues 309 to 378 (ITTT…QNST) and 423 to 455 (SADGGTAVSSAKPAENEGDAKPAESDANASNSG). Over residues 361–378 (GTSSGQSSSKHNKSQNST) the composition is skewed to low complexity. The segment covering 436–446 (AENEGDAKPAE) has biased composition (basic and acidic residues). An RING-type zinc finger spans residues 462 to 501 (CVICLDAPVEGACIPCGHMAGCMSCLKDIESKKWGCPICR).

It catalyses the reaction S-ubiquitinyl-[E2 ubiquitin-conjugating enzyme]-L-cysteine + [acceptor protein]-L-lysine = [E2 ubiquitin-conjugating enzyme]-L-cysteine + N(6)-ubiquitinyl-[acceptor protein]-L-lysine.. It functions in the pathway protein modification; protein ubiquitination. This Oryza sativa subsp. japonica (Rice) protein is Probable E3 ubiquitin-protein ligase XBOS34 (XBOS34).